The following is an 88-amino-acid chain: uncharacterized protein (88 aa).

Residues Cys-39 to Cys-63 form a dksA C4-type zinc finger.

This is an uncharacterized protein from Escherichia coli (strain K12).